The chain runs to 106 residues: Large ribosomal subunit protein eL42 (106 aa).

It belongs to the eukaryotic ribosomal protein eL42 family.

This is Large ribosomal subunit protein eL42 (RPL44) from Cyberlindnera jadinii (Torula yeast).